Consider the following 94-residue polypeptide: YcgL domain-containing protein VP0875 (94 aa).

In terms of domain architecture, YcgL spans 1–84 (MLCSIYKSSK…PPENLLEKYK (84 aa)).

In Vibrio parahaemolyticus serotype O3:K6 (strain RIMD 2210633), this protein is YcgL domain-containing protein VP0875.